A 732-amino-acid chain; its full sequence is Zinc/cadmium/lead-transporting P-type ATPase (732 aa).

Residues 1–124 (MSTPDNHGKK…QAAEEPQASR (124 aa)) lie on the Cytoplasmic side of the membrane. The HMA domain maps to 48-112 (TRYSWKVSGM…ALQKAGYSLR (65 aa)). Positions 58, 59, and 62 each coordinate Zn(2+). Residues 125–145 (LKENLPLITLIVMMAISWGLE) form a helical membrane-spanning segment. A topological domain (periplasmic) is located at residue glutamine 146. Residues 147–167 (FNHPFGQLAFIATTLVGLYPI) form a helical membrane-spanning segment. The Cytoplasmic segment spans residues 168–179 (ARQALRLIKSGS). Residues 180 to 197 (YFAIETLMSVAAIGALFI) form a helical membrane-spanning segment. Topologically, residues 198 to 202 (GATAE) are periplasmic. The chain crosses the membrane as a helical span at residues 203 to 222 (AAMVLLLFLIGERLEGWAAS). The Cytoplasmic portion of the chain corresponds to 223-356 (RARQGVSALM…IDRFSRIYTP (134 aa)). The chain crosses the membrane as a helical span at residues 357-377 (AIMAVALLVTLVPPLLFAASW). At 378–383 (QEWIYK) the chain is on the periplasmic side. Residues 384–404 (GLTLLLIGCPCALVISTPAAI) form a helical membrane-spanning segment. 2 residues coordinate Zn(2+): cysteine 392 and cysteine 394. Over 405-685 (TSGLAAAARR…RATHANIRQN (281 aa)) the chain is Cytoplasmic. Aspartate 436 (4-aspartylphosphate intermediate) is an active-site residue. Positions 436, 438, and 628 each coordinate Mg(2+). The chain crosses the membrane as a helical span at residues 686 to 702 (ITIALGLKGIFLVTTLL). Residues 703–707 (GMTGL) are Periplasmic-facing. A helical transmembrane segment spans residues 708–729 (WLAVLADTGATVLVTANALRLL). Aspartate 714 is a Zn(2+) binding site. Residues 730-732 (RRR) are Cytoplasmic-facing.

This sequence belongs to the cation transport ATPase (P-type) (TC 3.A.3) family. Type IB subfamily.

The protein localises to the cell inner membrane. It catalyses the reaction Pb(2+)(in) + ATP + H2O = Pb(2+)(out) + ADP + phosphate + H(+). The enzyme catalyses Zn(2+)(in) + ATP + H2O = Zn(2+)(out) + ADP + phosphate + H(+). It carries out the reaction Cd(2+)(in) + ATP + H2O = Cd(2+)(out) + ADP + phosphate + H(+). With respect to regulation, inhibited by orthovanadate. In terms of biological role, confers resistance to zinc, cadmium and lead. Couples the hydrolysis of ATP with the export of zinc, cadmium or lead, with highest activity when the metals are present as metal-thiolate complexes. Can also bind nickel, copper, cobalt and mercury. This is Zinc/cadmium/lead-transporting P-type ATPase from Escherichia coli (strain K12).